The primary structure comprises 332 residues: Ephrin-B2a (332 aa).

Positions 1-24 are cleaved as a signal peptide; sequence MGDSLWRYYFGVLVIACKVNLSRA. N-linked (GlcNAc...) asparagine glycans are attached at residues asparagine 20 and asparagine 33. Residues 25-161 enclose the Ephrin RBD domain; that stretch reads LILDSIYWNT…TKSMKIIMKV (137 aa). The Extracellular portion of the chain corresponds to 25–225; sequence LILDSIYWNT…VIGSEVALFA (201 aa). 2 cysteine pairs are disulfide-bonded: cysteine 59–cysteine 98 and cysteine 86–cysteine 150. N-linked (GlcNAc...) asparagine glycosylation is present at asparagine 136. Residues 162 to 212 form a disordered region; that stretch reads GQNPSDPISPKDYPTSYPPKHPDLGGKDSKSNEVLKPDASPHGEDKGDGNK. Residues 181–210 show a composition bias toward basic and acidic residues; sequence KHPDLGGKDSKSNEVLKPDASPHGEDKGDG. Residue asparagine 211 is glycosylated (N-linked (GlcNAc...) asparagine). The helical transmembrane segment at 226-246 threads the bilayer; the sequence is CIASASVIVIIIIIMLVFLLL. The Cytoplasmic segment spans residues 247–332; it reads KYRRRHRKHS…QSPANIYYKV (86 aa). A disordered region spans residues 255-285; it reads HSPQHATTLSLSTLATPKRGGSGGNNNGSEP. A compositionally biased stretch (low complexity) spans 260-270; it reads ATTLSLSTLAT. Positions 330 to 332 match the PDZ-binding motif; the sequence is YKV.

It belongs to the ephrin family. Binds to the receptor tyrosine kinase ephb4. Post-translationally, inducible phosphorylation of tyrosine residues in the cytoplasmic domain.

It is found in the cell membrane. Cell surface transmembrane ligand for Eph receptors, a family of receptor tyrosine kinases which are crucial for migration, repulsion and adhesion during neuronal, vascular and epithelial development. Binds promiscuously Eph receptors residing on adjacent cells, leading to contact-dependent bidirectional signaling into neighboring cells. The signaling pathway downstream of the receptor is referred to as forward signaling while the signaling pathway downstream of the ephrin ligand is referred to as reverse signaling. Together with ephb4 may play a central role in heart morphogenesis and angiogenesis through regulation of cell adhesion and cell migration. This Danio rerio (Zebrafish) protein is Ephrin-B2a (efnb2a).